The sequence spans 449 residues: Chromosomal replication initiator protein DnaA (449 aa).

The segment at 1 to 72 is domain I, interacts with DnaA modulators; the sequence is MPNLEELWAY…VEGVYEFAQL (72 aa). Residues 72–109 are domain II; it reads LEVDPVIMTKDELQPAPATDQRPAVEEDDQNLTFKAKT. Residues 110–326 are domain III, AAA+ region; sequence HLNPKYTFDH…GALVRVQAFS (217 aa). Gly-154, Gly-156, Lys-157, and Thr-158 together coordinate ATP. The domain IV, binds dsDNA stretch occupies residues 327–449; the sequence is TMKNEDITTS…ELRNILKNRG (123 aa).

The protein belongs to the DnaA family. In terms of assembly, oligomerizes as a right-handed, spiral filament on DNA at oriC.

It is found in the cytoplasm. Its function is as follows. Plays an essential role in the initiation and regulation of chromosomal replication. ATP-DnaA binds to the origin of replication (oriC) to initiate formation of the DNA replication initiation complex once per cell cycle. Binds the DnaA box (a 9 base pair repeat at the origin) and separates the double-stranded (ds)DNA. Forms a right-handed helical filament on oriC DNA; dsDNA binds to the exterior of the filament while single-stranded (ss)DNA is stabiized in the filament's interior. The ATP-DnaA-oriC complex binds and stabilizes one strand of the AT-rich DNA unwinding element (DUE), permitting loading of DNA polymerase. After initiation quickly degrades to an ADP-DnaA complex that is not apt for DNA replication. Binds acidic phospholipids. The chain is Chromosomal replication initiator protein DnaA from Lacticaseibacillus paracasei (strain ATCC 334 / BCRC 17002 / CCUG 31169 / CIP 107868 / KCTC 3260 / NRRL B-441) (Lactobacillus paracasei).